Consider the following 1435-residue polypeptide: Neuropathy target esterase sws (1435 aa).

The Lumenal portion of the chain corresponds to M1–T35. The chain crosses the membrane as a helical span at residues M36 to F56. Residues K57–L1435 lie on the Cytoplasmic side of the membrane. I176–R303 is an a nucleoside 3',5'-cyclic phosphate binding site. Positions A361–A372 are enriched in low complexity. Disordered stretches follow at residues A361–G405 and N422–V452. Residues G435–Q449 are compositionally biased toward polar residues. The residue at position 443 (S443) is a Phosphoserine. Residues E474–R601 and I590–R717 contribute to the a nucleoside 3',5'-cyclic phosphate site. Positions L944–R1110 constitute a PNPLA domain. Positions G948–G953 match the GXGXXG motif. Positions G975 to G979 match the GXSXG motif. The Nucleophile role is filled by S977. The active-site Proton acceptor is the D1097. The DGA/G motif lies at D1097–G1099. A disordered region spans residues M1308 to L1435. A compositionally biased stretch (polar residues) spans A1311–A1322. Basic and acidic residues-rich tracts occupy residues S1330 to S1361 and M1393 to R1424. The segment covering S1425–L1435 has biased composition (polar residues).

The protein belongs to the NTE family. In terms of assembly, interacts with Pka-C3; interaction inhibits the catalytic function of Pka-C3 and the esterase activity of sws.

The protein localises to the endoplasmic reticulum membrane. It carries out the reaction a 1-acyl-sn-glycero-3-phosphocholine + H2O = sn-glycerol 3-phosphocholine + a fatty acid + H(+). Phospholipase B that deacylates intracellular phosphatidylcholine (PtdCho), generating glycerophosphocholine (GroPtdCho). This deacylation occurs at both sn-2 and sn-1 positions of PtdCho. Its specific chemical modification by certain organophosphorus (OP) compounds leads to distal axonopathy. Plays a role in the signaling mechanism between neurons and glia that regulates glia wrapping during development of the adult brain. Essential for membrane lipid homeostasis and cell survival in both neurons and glia of the adult brain. The protein is Neuropathy target esterase sws of Drosophila persimilis (Fruit fly).